A 695-amino-acid polypeptide reads, in one-letter code: Putative ATP-dependent RNA helicase L540 (695 aa).

The Helicase ATP-binding domain maps to 53–219 (LSALENYQLV…FNSVDSTVID (167 aa)). 66–73 (SSTGSGKS) is a binding site for ATP. The DEAH box signature appears at 164–167 (DEAH). The Helicase C-terminal domain maps to 247–434 (LIEDLIHQQI…GINMMNQLMD (188 aa)).

The protein belongs to the DEAD box helicase family. DEAH subfamily.

It is found in the virion. The catalysed reaction is ATP + H2O = ADP + phosphate + H(+). This is Putative ATP-dependent RNA helicase L540 from Acanthamoeba polyphaga (Amoeba).